The primary structure comprises 83 residues: MAFKREIHGLVVKKAGDKTATILVERRVMHPRYRKFVKKFKKYLVHDEKNAVKIGDTISAVECRPLSAKKSFRLKAVLKAGVE.

Belongs to the universal ribosomal protein uS17 family. In terms of assembly, part of the 30S ribosomal subunit.

In terms of biological role, one of the primary rRNA binding proteins, it binds specifically to the 5'-end of 16S ribosomal RNA. The sequence is that of Small ribosomal subunit protein uS17 from Campylobacter hominis (strain ATCC BAA-381 / DSM 21671 / CCUG 45161 / LMG 19568 / NCTC 13146 / CH001A).